Consider the following 338-residue polypeptide: tRNA N6-adenosine threonylcarbamoyltransferase (338 aa).

Fe cation is bound by residues His114 and His118. Substrate contacts are provided by residues 136 to 140 (LVSGG), Asp169, Gly182, Asp186, and Asn275. Asp301 contributes to the Fe cation binding site.

It belongs to the KAE1 / TsaD family. Fe(2+) serves as cofactor.

The protein localises to the cytoplasm. It carries out the reaction L-threonylcarbamoyladenylate + adenosine(37) in tRNA = N(6)-L-threonylcarbamoyladenosine(37) in tRNA + AMP + H(+). Its function is as follows. Required for the formation of a threonylcarbamoyl group on adenosine at position 37 (t(6)A37) in tRNAs that read codons beginning with adenine. Is involved in the transfer of the threonylcarbamoyl moiety of threonylcarbamoyl-AMP (TC-AMP) to the N6 group of A37, together with TsaE and TsaB. TsaD likely plays a direct catalytic role in this reaction. The chain is tRNA N6-adenosine threonylcarbamoyltransferase from Streptococcus equi subsp. zooepidemicus (strain MGCS10565).